Reading from the N-terminus, the 305-residue chain is Aspartate carbamoyltransferase catalytic subunit (305 aa).

Carbamoyl phosphate-binding residues include R53 and T54. Position 82 (K82) interacts with L-aspartate. Carbamoyl phosphate is bound by residues R103, H131, and Q134. Residues R164 and R226 each contribute to the L-aspartate site. Positions 265 and 266 each coordinate carbamoyl phosphate.

Belongs to the aspartate/ornithine carbamoyltransferase superfamily. ATCase family. As to quaternary structure, heterooligomer of catalytic and regulatory chains.

The catalysed reaction is carbamoyl phosphate + L-aspartate = N-carbamoyl-L-aspartate + phosphate + H(+). It participates in pyrimidine metabolism; UMP biosynthesis via de novo pathway; (S)-dihydroorotate from bicarbonate: step 2/3. In terms of biological role, catalyzes the condensation of carbamoyl phosphate and aspartate to form carbamoyl aspartate and inorganic phosphate, the committed step in the de novo pyrimidine nucleotide biosynthesis pathway. The polypeptide is Aspartate carbamoyltransferase catalytic subunit (Ignicoccus hospitalis (strain KIN4/I / DSM 18386 / JCM 14125)).